The following is a 640-amino-acid chain: Chaperone protein dnaK2 (640 aa).

Phosphothreonine; by autocatalysis is present on threonine 197. The tract at residues 605 to 640 (VYQSAQSSDGTGSSSSGGSGSGGDDEVIDAEFSETK) is disordered. Residues 627-640 (GDDEVIDAEFSETK) show a composition bias toward acidic residues.

This sequence belongs to the heat shock protein 70 family.

Acts as a chaperone. The protein is Chaperone protein dnaK2 (dnaK2) of Thermosynechococcus vestitus (strain NIES-2133 / IAM M-273 / BP-1).